The sequence spans 236 residues: 1-(5-phosphoribosyl)-5-[(5-phosphoribosylamino)methylideneamino] imidazole-4-carboxamide isomerase (236 aa).

Asp-8 serves as the catalytic Proton acceptor. Asp-127 acts as the Proton donor in catalysis.

This sequence belongs to the HisA/HisF family.

It is found in the cytoplasm. It carries out the reaction 1-(5-phospho-beta-D-ribosyl)-5-[(5-phospho-beta-D-ribosylamino)methylideneamino]imidazole-4-carboxamide = 5-[(5-phospho-1-deoxy-D-ribulos-1-ylimino)methylamino]-1-(5-phospho-beta-D-ribosyl)imidazole-4-carboxamide. The protein operates within amino-acid biosynthesis; L-histidine biosynthesis; L-histidine from 5-phospho-alpha-D-ribose 1-diphosphate: step 4/9. This Campylobacter fetus subsp. fetus (strain 82-40) protein is 1-(5-phosphoribosyl)-5-[(5-phosphoribosylamino)methylideneamino] imidazole-4-carboxamide isomerase.